The primary structure comprises 57 residues: uncharacterized protein (57 aa).

Proetin of unknown function whose overexpression causes growth inhibition. Overexpression increases the expression of ergosterol synthesis genes. This is an uncharacterized protein from Saccharomyces cerevisiae (strain ATCC 204508 / S288c) (Baker's yeast).